A 198-amino-acid chain; its full sequence is Large ribosomal subunit protein bL12m (198 aa).

A mitochondrion-targeting transit peptide spans 1–36 (MLPAAARPLWGPCLGLRAAAFRLARRQVPCVCAVRH). N6-acetyllysine occurs at positions 125, 138, 142, and 144. Lys150 is modified (N6-acetyllysine; alternate). Lys150 carries the N6-succinyllysine; alternate modification. A Glycyl lysine isopeptide (Lys-Gly) (interchain with G-Cter in ubiquitin) cross-link involves residue Lys150. Lys162 bears the N6-succinyllysine mark. Residues Lys163 and Lys173 each carry the N6-acetyllysine modification. Position 178 is an N6-acetyllysine; alternate (Lys178). An N6-succinyllysine; alternate modification is found at Lys178. Lys185 carries the post-translational modification N6-acetyllysine.

This sequence belongs to the bacterial ribosomal protein bL12 family. Component of the mitochondrial large ribosomal subunit (mt-LSU). Mature mammalian 55S mitochondrial ribosomes consist of a small (28S) and a large (39S) subunit. The 28S small subunit contains a 12S ribosomal RNA (12S mt-rRNA) and 30 different proteins. The 39S large subunit contains a 16S rRNA (16S mt-rRNA), a copy of mitochondrial valine transfer RNA (mt-tRNA(Val)), which plays an integral structural role, and 52 different proteins. bL12m interacts with NOA1. Post-translationally, two mature forms are produced by differential two-step proteolytic cleavage. Cleaved by the mitochondrial processing protease to produce the long mature form and subsequently by the mitochondrial intermediate protease to produce the short mature form. In the presence of CUL3, undergoes 'Lys-63'-linked ubiquitination at Lys-150 which results in proteasomal degradation.

The protein localises to the mitochondrion matrix. Its function is as follows. As a component of the mitochondrial large ribosomal subunit, plays a role in mitochondrial translation. When present in mitochondria as a free protein not associated with the ribosome, associates with mitochondrial RNA polymerase POLRMT to activate transcription. Required for POLRMT stability. In Homo sapiens (Human), this protein is Large ribosomal subunit protein bL12m (MRPL12).